We begin with the raw amino-acid sequence, 124 residues long: Small ribosomal subunit protein uS12 (124 aa).

At Asp-89 the chain carries 3-methylthioaspartic acid. The segment at 104–124 is disordered; it reads TAGVENRKQSRSKYGAKRPKK. The segment covering 112–124 has biased composition (basic residues); it reads QSRSKYGAKRPKK.

The protein belongs to the universal ribosomal protein uS12 family. In terms of assembly, part of the 30S ribosomal subunit. Contacts proteins S8 and S17. May interact with IF1 in the 30S initiation complex.

Its function is as follows. With S4 and S5 plays an important role in translational accuracy. Functionally, interacts with and stabilizes bases of the 16S rRNA that are involved in tRNA selection in the A site and with the mRNA backbone. Located at the interface of the 30S and 50S subunits, it traverses the body of the 30S subunit contacting proteins on the other side and probably holding the rRNA structure together. The combined cluster of proteins S8, S12 and S17 appears to hold together the shoulder and platform of the 30S subunit. The protein is Small ribosomal subunit protein uS12 of Pseudothermotoga lettingae (strain ATCC BAA-301 / DSM 14385 / NBRC 107922 / TMO) (Thermotoga lettingae).